The following is a 75-amino-acid chain: Cruzioseptin-7 (75 aa).

A signal peptide spans 1 to 22; the sequence is MAKLKKSLFLVLFLGLVSLSIC. Residues 23-43 constitute a propeptide that is removed on maturation; it reads EEEKREEENEEVQEDDDQSEE. The segment at 25–44 is disordered; it reads EKREEENEEVQEDDDQSEEK. The span at 30-41 shows a compositional bias: acidic residues; it reads ENEEVQEDDDQS.

Expressed by the skin glands.

The protein localises to the secreted. Its function is as follows. Has antimicrobial activity. This chain is Cruzioseptin-7, found in Cruziohyla calcarifer (Splendid leaf frog).